The chain runs to 329 residues: Sex comb on midleg-like protein 1 (329 aa).

Phosphoserine is present on residues Ser138 and Ser238. The disordered stretch occupies residues 138-157 (SPTLPVSRRENNSPSNLPRP). In terms of domain architecture, SAM spans 258–325 (WSVEAVVLFL…YYIDRLKQGK (68 aa)).

Belongs to the SCM family.

Its subcellular location is the nucleus. Putative Polycomb group (PcG) protein. PcG proteins act by forming multiprotein complexes, which are required to maintain the transcriptionally repressive state of homeotic genes throughout development. May be involved in spermatogenesis during sexual maturation. The polypeptide is Sex comb on midleg-like protein 1 (SCML1) (Gorilla gorilla gorilla (Western lowland gorilla)).